We begin with the raw amino-acid sequence, 122 residues long: Large ribosomal subunit protein uL14 (122 aa).

This sequence belongs to the universal ribosomal protein uL14 family. As to quaternary structure, part of the 50S ribosomal subunit. Forms a cluster with proteins L3 and L19. In the 70S ribosome, L14 and L19 interact and together make contacts with the 16S rRNA in bridges B5 and B8.

In terms of biological role, binds to 23S rRNA. Forms part of two intersubunit bridges in the 70S ribosome. The protein is Large ribosomal subunit protein uL14 of Sulfurimonas denitrificans (strain ATCC 33889 / DSM 1251) (Thiomicrospira denitrificans (strain ATCC 33889 / DSM 1251)).